Reading from the N-terminus, the 743-residue chain is MEEEGLECPNSSSEKRYFPESLDSSDGDEEEVLACEDLELNPFDGLPYSSRYYKLLKEREDLPIWKEKYSFMENLLQNQIVIVSGDAKCGKSAQVPQWCAEYCLSIHYQHGGVICTQVHKQTVVQLALRVADEMDVNIGHEVGYVIPFENCCTNETILRYCTDDMLQREMMSNPFLGSYGVIILDDIHERSIATDVLLGLLKDVLLARPELKLIINSSPHLISKLNSYYGNVPVIEVKNKHPVEVVYLSEAQKDSFESILRLIFEIHHSGEKGDIVVFLACEQDIEKVCETVYQGSNLNPDLGELVVVPLYPKEKCSLFKPLDETEKRCQVYQRRVVLTTSSGEFLIWSNSVRFVIDVGVERRKVYNPRIRANSLVMQPISQSQAEIRKQILGSSSSGKFFCLYTEEFASKDMTPLKPAEMQEANLTSMVLFMKRIDIAGLGHCDFMNRPAPESLMQALEDLDYLAALDNDGNLSEFGIIMSEFPLDPQLSKSILASCEFDCVDEVLTIAAMVTAPNCFSHVPHGAEEAALTCWKTFLHPEGDHFTLISIYKAYQDTTLNSSSEYCVEKWCRDYFLNCSALRMADVIRAELLEIIKRIELPYAEPAFGSKENTLNIKKALLSGYFMQIARDVDGSGNYLMLTHKQVAQLHPLSGYSITKKMPEWVLFHKFSISENNYIRITSEISPELFMQLVPQYYFSNLPPSESKDILQQVVDHLSPVSTMNKEQQMCETCPETEQRCTLQ.

Methionine 1 bears the N-acetylmethionine mark. A disordered region spans residues methionine 1–aspartate 28. A Helicase ATP-binding domain is found at methionine 72–lysine 238. Glycine 85 to serine 92 contributes to the ATP binding site. A DEAH box motif is present at residues aspartate 185 to histidine 188.

The protein belongs to the DEAD box helicase family. DEAH subfamily. Expressed in lymphoid tissues (at protein level). Expressed in brain, heart, skeletal muscle, colon, thymus, spleen, kidney, liver, small intestine, placenta, lung, lymphoid tissues and blood leukocytes.

The protein localises to the nucleus. It is found in the mitochondrion. It catalyses the reaction ATP + H2O = ADP + phosphate + H(+). The protein is Putative pre-mRNA-splicing factor ATP-dependent RNA helicase DHX32 (DHX32) of Homo sapiens (Human).